A 141-amino-acid chain; its full sequence is Hemoglobin subunit alpha (141 aa).

A Globin domain is found at 1–141 (VLSAEDKANV…VSTVLTSKYR (141 aa)). A Phosphoserine modification is found at serine 3. Lysine 7 and lysine 11 each carry N6-succinyllysine. Lysine 16 carries the N6-acetyllysine; alternate modification. Lysine 16 is subject to N6-succinyllysine; alternate. Tyrosine 24 carries the post-translational modification Phosphotyrosine. The residue at position 35 (serine 35) is a Phosphoserine. Lysine 40 is subject to N6-succinyllysine. A Phosphoserine modification is found at serine 49. Histidine 58 provides a ligand contact to O2. Histidine 87 contacts heme b. Phosphoserine is present on serine 102. A Phosphothreonine modification is found at threonine 108. Residues serine 124 and serine 131 each carry the phosphoserine modification. Phosphothreonine is present on residues threonine 134 and threonine 137. Serine 138 carries the phosphoserine modification.

It belongs to the globin family. In terms of assembly, heterotetramer of two alpha chains and two beta chains. As to expression, red blood cells.

Functionally, involved in oxygen transport from the lung to the various peripheral tissues. This Peromyscus crinitus (Canyon mouse) protein is Hemoglobin subunit alpha.